The primary structure comprises 726 residues: Dipeptidyl-peptidase 5 (726 aa).

A signal peptide spans Met-1 to Ala-19. Residues Asn-96 and Asn-252 are each glycosylated (N-linked (GlcNAc...) asparagine). A disordered region spans residues Ala-269–Pro-291. Ser-558 serves as the catalytic Charge relay system. An N-linked (GlcNAc...) asparagine glycan is attached at Asn-605. Catalysis depends on charge relay system residues Asp-641 and His-673. Asn-699 is a glycosylation site (N-linked (GlcNAc...) asparagine).

The protein belongs to the peptidase S9C family.

The protein resides in the secreted. Its function is as follows. Extracellular dipeptidyl-peptidase which removes N-terminal dipeptides sequentially from polypeptides having unsubstituted N-termini. Contributes to pathogenicity. This chain is Dipeptidyl-peptidase 5 (DPP5), found in Trichophyton tonsurans (Scalp ringworm fungus).